The primary structure comprises 78 residues: Large ribosomal subunit protein bL28 (78 aa).

Residues 1 to 22 form a disordered region; that stretch reads MSRVCQVTGKRPMSGNNRSHAM.

It belongs to the bacterial ribosomal protein bL28 family.

This Yersinia pseudotuberculosis serotype O:1b (strain IP 31758) protein is Large ribosomal subunit protein bL28.